The following is a 1168-amino-acid chain: Transcription-repair-coupling factor (1168 aa).

The Helicase ATP-binding domain occupies aspartate 633–isoleucine 794. Glycine 646–threonine 653 is a binding site for ATP. The short motif at aspartate 747–glutamine 750 is the DEEQ box element. The Helicase C-terminal domain maps to valine 808–asparagine 969.

This sequence in the N-terminal section; belongs to the UvrB family. The protein in the C-terminal section; belongs to the helicase family. RecG subfamily.

Its subcellular location is the cytoplasm. Functionally, couples transcription and DNA repair by recognizing RNA polymerase (RNAP) stalled at DNA lesions. Mediates ATP-dependent release of RNAP and its truncated transcript from the DNA, and recruitment of nucleotide excision repair machinery to the damaged site. The polypeptide is Transcription-repair-coupling factor (Staphylococcus aureus (strain MRSA252)).